We begin with the raw amino-acid sequence, 356 residues long: D-alanine--D-alanine ligase (356 aa).

One can recognise an ATP-grasp domain in the interval 134–339 (KQLFAHRGLP…YSDLIKKLIE (206 aa)). 167-222 (HDKLEYPVFVKPANLGSSVGISKCNNEEELKNGIEEAFQFDRKLVIEQGIEAREIE) contributes to the ATP binding site. Residues aspartate 293, glutamate 306, and asparagine 308 each contribute to the Mg(2+) site.

It belongs to the D-alanine--D-alanine ligase family. Mg(2+) is required as a cofactor. Requires Mn(2+) as cofactor.

It localises to the cytoplasm. It carries out the reaction 2 D-alanine + ATP = D-alanyl-D-alanine + ADP + phosphate + H(+). Its pathway is cell wall biogenesis; peptidoglycan biosynthesis. In terms of biological role, cell wall formation. The sequence is that of D-alanine--D-alanine ligase from Staphylococcus saprophyticus subsp. saprophyticus (strain ATCC 15305 / DSM 20229 / NCIMB 8711 / NCTC 7292 / S-41).